We begin with the raw amino-acid sequence, 356 residues long: NADH-quinone oxidoreductase subunit H (356 aa).

Transmembrane regions (helical) follow at residues 22–42, 59–79, 93–113, 124–144, 171–191, 198–218, 240–260, 285–305, and 321–341; these read GVVSIKVIALIICLLLATAYL, PSLAGPFGLLQPIADAIKLVF, FIIAPIITFVLSLLGWSVIPI, IGGILFILAVTSLGVYGIIIA, MALSIVAVLIVTGEMDLIQIV, PIWLTIMMLPLAVIYFISILA, VEYSSMAFAMFFLGEYANMIL, IPGYIWFILKVSMVLFCFLWI, and GLKVFLPIVLAWIIVVSTILV.

It belongs to the complex I subunit 1 family. NDH-1 is composed of 14 different subunits. Subunits NuoA, H, J, K, L, M, N constitute the membrane sector of the complex.

The protein resides in the cell inner membrane. It carries out the reaction a quinone + NADH + 5 H(+)(in) = a quinol + NAD(+) + 4 H(+)(out). Functionally, NDH-1 shuttles electrons from NADH, via FMN and iron-sulfur (Fe-S) centers, to quinones in the respiratory chain. The immediate electron acceptor for the enzyme in this species is believed to be ubiquinone. Couples the redox reaction to proton translocation (for every two electrons transferred, four hydrogen ions are translocated across the cytoplasmic membrane), and thus conserves the redox energy in a proton gradient. This subunit may bind ubiquinone. In Orientia tsutsugamushi (strain Boryong) (Rickettsia tsutsugamushi), this protein is NADH-quinone oxidoreductase subunit H.